The following is a 326-amino-acid chain: uncharacterized protein (326 aa).

It belongs to the transferase hexapeptide repeat family.

This is an uncharacterized protein from Escherichia coli (strain K12).